The primary structure comprises 713 residues: B3 domain-containing transcription factor VAL3 (713 aa).

Residues 328–427 constitute a DNA-binding region (TF-B3); sequence FEKILSATDT…KLILGFRKAS (100 aa). Disordered stretches follow at residues 459-478 and 616-713; these read VECS…SKRQ and LNSD…TSSM. A compositionally biased stretch (basic residues) spans 464 to 477; sequence GKKKSSMMITRSKR. Residues 616 to 629 are compositionally biased toward polar residues; it reads LNSDNGLHQSANNS. The segment covering 663–674 has biased composition (basic and acidic residues); the sequence is TKSETLPHDDTV. Residues 676 to 688 show a composition bias toward low complexity; the sequence is SSFTSPSSSSAHS. The segment covering 690–700 has biased composition (basic and acidic residues); it reads NNKEDEGKLKT. Low complexity predominate over residues 701–713; it reads TTEIADTTTTSSM.

The protein localises to the nucleus. Its function is as follows. May be involved in plant development. This chain is B3 domain-containing transcription factor VAL3 (VAL3), found in Arabidopsis thaliana (Mouse-ear cress).